The following is a 114-amino-acid chain: Tyrosine-protein phosphatase 27 (114 aa).

Residues 1–114 form the Tyrosine-protein phosphatase domain; that stretch reads WQMIVEHKCC…ELGNDNPIVV (114 aa). Residue Asp82 coordinates substrate.

This sequence belongs to the protein-tyrosine phosphatase family.

The enzyme catalyses O-phospho-L-tyrosyl-[protein] + H2O = L-tyrosyl-[protein] + phosphate. The sequence is that of Tyrosine-protein phosphatase 27 (STY-27) from Styela plicata (Wrinkled sea squirt).